The primary structure comprises 368 residues: N-acetylneuraminate epimerase (368 aa).

Positions 1–19 (MNKTITALAIMMASFAANA) are cleaved as a signal peptide. Kelch repeat units lie at residues 40–84 (TVYI…AFID), 86–137 (NLYV…FVHN), 139–173 (KAYV…KINA), 174–219 (HYFD…VNKG), 222–265 (TWLI…VAGG), 287–336 (ENYQ…PWNN), and 338–367 (LLII…VTVQ). Glu-228 (proton acceptor) is an active-site residue.

Belongs to the NanM family. In terms of assembly, homodimer.

Its subcellular location is the periplasm. The enzyme catalyses N-acetyl-alpha-neuraminate = N-acetyl-beta-neuraminate. Functionally, converts alpha-N-acetylneuranimic acid (Neu5Ac) to the beta-anomer, accelerating the equilibrium between the alpha- and beta-anomers. Probably facilitates sialidase-negative bacteria to compete successfully for limited amounts of extracellular Neu5Ac, which is likely taken up in the beta-anomer. In addition, the rapid removal of sialic acid from solution might be advantageous to the bacterium to damp down host responses. This Escherichia coli O9:H4 (strain HS) protein is N-acetylneuraminate epimerase.